The sequence spans 544 residues: Glutamyl-tRNA(Gln) amidotransferase subunit B, chloroplastic/mitochondrial (544 aa).

This sequence belongs to the GatB/GatE family. GatB subfamily. Subunit of the heterotrimeric GatCAB amidotransferase (AdT) complex, composed of A, B and C subunits.

It localises to the mitochondrion. The protein resides in the plastid. It is found in the chloroplast. It carries out the reaction L-glutamyl-tRNA(Gln) + L-glutamine + ATP + H2O = L-glutaminyl-tRNA(Gln) + L-glutamate + ADP + phosphate + H(+). Allows the formation of correctly charged Gln-tRNA(Gln) through the transamidation of misacylated Glu-tRNA(Gln) in chloroplasts and mitochondria. The reaction takes place in the presence of glutamine and ATP through an activated gamma-phospho-Glu-tRNA(Gln). This chain is Glutamyl-tRNA(Gln) amidotransferase subunit B, chloroplastic/mitochondrial, found in Oryza sativa subsp. japonica (Rice).